A 532-amino-acid polypeptide reads, in one-letter code: 2,3-bisphosphoglycerate-independent phosphoglycerate mutase (532 aa).

Mn(2+) is bound by residues Asp-13 and Ser-63. The Phosphoserine intermediate role is filled by Ser-63. Substrate-binding positions include His-124, 154–155 (RD), Arg-187, Arg-193, 262–265 (RPDR), and Lys-343. 5 residues coordinate Mn(2+): Asp-421, His-425, Asp-463, His-464, and His-481.

It belongs to the BPG-independent phosphoglycerate mutase family. Monomer. Requires Mn(2+) as cofactor.

It catalyses the reaction (2R)-2-phosphoglycerate = (2R)-3-phosphoglycerate. It participates in carbohydrate degradation; glycolysis; pyruvate from D-glyceraldehyde 3-phosphate: step 3/5. Its function is as follows. Catalyzes the interconversion of 2-phosphoglycerate and 3-phosphoglycerate. The chain is 2,3-bisphosphoglycerate-independent phosphoglycerate mutase from Mesoplasma florum (strain ATCC 33453 / NBRC 100688 / NCTC 11704 / L1) (Acholeplasma florum).